Consider the following 555-residue polypeptide: Glutamate--tRNA ligase (555 aa).

The 'HIGH' region signature appears at 100–110 (PNPSGPLHIGH).

It belongs to the class-I aminoacyl-tRNA synthetase family. Glutamate--tRNA ligase type 2 subfamily.

It localises to the cytoplasm. The catalysed reaction is tRNA(Glu) + L-glutamate + ATP = L-glutamyl-tRNA(Glu) + AMP + diphosphate. In terms of biological role, catalyzes the attachment of glutamate to tRNA(Glu) in a two-step reaction: glutamate is first activated by ATP to form Glu-AMP and then transferred to the acceptor end of tRNA(Glu). The sequence is that of Glutamate--tRNA ligase from Methanococcus maripaludis (strain C6 / ATCC BAA-1332).